The following is a 403-amino-acid chain: Dynactin subunit 2-B (403 aa).

The segment at 1-26 is disordered; the sequence is MADPKYADLPGIARNEPDLYETSDLP. A coiled-coil region spans residues 99-132; that stretch reads PQQKYQRLLHEVQELTQEVEKTQSTLKESATEEK. Residues 183–206 form a disordered region; it reads AAKTRKDPEGKSSAKGPGPDNENL. A compositionally biased stretch (basic and acidic residues) spans 184–194; the sequence is AKTRKDPEGKS. The stretch at 381–401 forms a coiled coil; the sequence is KENLATVEDNFSSIDGRIKKL.

The protein belongs to the dynactin subunit 2 family. As to quaternary structure, subunit of dynactin, a multiprotein complex part of a tripartite complex with dynein and a adapter, such as BICDL1, BICD2 or HOOK3. The dynactin complex is built around ACTR1A/ACTB filament and consists of an actin-related filament composed of a shoulder domain, a pointed end and a barbed end. Its length is defined by its flexible shoulder domain. The soulder is composed of 2 DCTN1 subunits, 4 DCTN2 and 2 DCTN3.

It localises to the cytoplasm. The protein localises to the cytoskeleton. Its subcellular location is the microtubule organizing center. It is found in the centrosome. The protein resides in the membrane. In terms of biological role, part of the dynactin complex that activates the molecular motor dynein for ultra-processive transport along microtubules. In the dynactin soulder domain, binds the ACTR1A filament and acts as a molecular ruler to determine the length. Modulates cytoplasmic dynein binding to an organelle, and plays a role in prometaphase chromosome alignment and spindle organization during mitosis. Involved in anchoring microtubules to centrosomes. This Xenopus laevis (African clawed frog) protein is Dynactin subunit 2-B (dctn2-b).